A 159-amino-acid chain; its full sequence is 2-C-methyl-D-erythritol 2,4-cyclodiphosphate synthase (159 aa).

A divalent metal cation contacts are provided by Asp-8 and His-10. Residues 8 to 10 and 34 to 35 each bind 4-CDP-2-C-methyl-D-erythritol 2-phosphate; these read DVH and HS. Position 42 (His-42) interacts with a divalent metal cation. 4-CDP-2-C-methyl-D-erythritol 2-phosphate-binding positions include 56 to 58, 61 to 65, 100 to 106, 132 to 135, Phe-139, and Arg-142; these read DIG, FPDTD, AQAPKML, and TTTE.

Belongs to the IspF family. Homotrimer. The cofactor is a divalent metal cation.

It catalyses the reaction 4-CDP-2-C-methyl-D-erythritol 2-phosphate = 2-C-methyl-D-erythritol 2,4-cyclic diphosphate + CMP. The protein operates within isoprenoid biosynthesis; isopentenyl diphosphate biosynthesis via DXP pathway; isopentenyl diphosphate from 1-deoxy-D-xylulose 5-phosphate: step 4/6. Functionally, involved in the biosynthesis of isopentenyl diphosphate (IPP) and dimethylallyl diphosphate (DMAPP), two major building blocks of isoprenoid compounds. Catalyzes the conversion of 4-diphosphocytidyl-2-C-methyl-D-erythritol 2-phosphate (CDP-ME2P) to 2-C-methyl-D-erythritol 2,4-cyclodiphosphate (ME-CPP) with a corresponding release of cytidine 5-monophosphate (CMP). The polypeptide is 2-C-methyl-D-erythritol 2,4-cyclodiphosphate synthase (Salmonella dublin (strain CT_02021853)).